The following is a 162-amino-acid chain: NADH-quinone oxidoreductase subunit I (162 aa).

2 4Fe-4S ferredoxin-type domains span residues 54–83 (RRYE…IESE) and 93–122 (TRYD…ETQI). Cys-63, Cys-66, Cys-69, Cys-73, Cys-102, Cys-105, Cys-108, and Cys-112 together coordinate [4Fe-4S] cluster.

It belongs to the complex I 23 kDa subunit family. As to quaternary structure, NDH-1 is composed of 14 different subunits. Subunits NuoA, H, J, K, L, M, N constitute the membrane sector of the complex. [4Fe-4S] cluster is required as a cofactor.

Its subcellular location is the cell inner membrane. It carries out the reaction a quinone + NADH + 5 H(+)(in) = a quinol + NAD(+) + 4 H(+)(out). NDH-1 shuttles electrons from NADH, via FMN and iron-sulfur (Fe-S) centers, to quinones in the respiratory chain. The immediate electron acceptor for the enzyme in this species is believed to be ubiquinone. Couples the redox reaction to proton translocation (for every two electrons transferred, four hydrogen ions are translocated across the cytoplasmic membrane), and thus conserves the redox energy in a proton gradient. This Burkholderia vietnamiensis (strain G4 / LMG 22486) (Burkholderia cepacia (strain R1808)) protein is NADH-quinone oxidoreductase subunit I.